Here is a 55-residue protein sequence, read N- to C-terminus: MPQLNPAPWFMIMLMTWFTYSLLIQPKLLSFTSMNTPSNKTTSTTKPTPWTWPWT.

The chain crosses the membrane as a helical span at residues 8 to 24; that stretch reads PWFMIMLMTWFTYSLLI.

Belongs to the ATPase protein 8 family. Component of the ATP synthase complex composed at least of ATP5F1A/subunit alpha, ATP5F1B/subunit beta, ATP5MC1/subunit c (homooctomer), MT-ATP6/subunit a, MT-ATP8/subunit 8, ATP5ME/subunit e, ATP5MF/subunit f, ATP5MG/subunit g, ATP5MK/subunit k, ATP5MJ/subunit j, ATP5F1C/subunit gamma, ATP5F1D/subunit delta, ATP5F1E/subunit epsilon, ATP5PF/subunit F6, ATP5PB/subunit b, ATP5PD/subunit d, ATP5PO/subunit OSCP. ATP synthase complex consists of a soluble F(1) head domain (subunits alpha(3) and beta(3)) - the catalytic core - and a membrane F(0) domain - the membrane proton channel (subunits c, a, 8, e, f, g, k and j). These two domains are linked by a central stalk (subunits gamma, delta, and epsilon) rotating inside the F1 region and a stationary peripheral stalk (subunits F6, b, d, and OSCP).

It is found in the mitochondrion membrane. In terms of biological role, subunit 8, of the mitochondrial membrane ATP synthase complex (F(1)F(0) ATP synthase or Complex V) that produces ATP from ADP in the presence of a proton gradient across the membrane which is generated by electron transport complexes of the respiratory chain. ATP synthase complex consist of a soluble F(1) head domain - the catalytic core - and a membrane F(1) domain - the membrane proton channel. These two domains are linked by a central stalk rotating inside the F(1) region and a stationary peripheral stalk. During catalysis, ATP synthesis in the catalytic domain of F(1) is coupled via a rotary mechanism of the central stalk subunits to proton translocation. In vivo, can only synthesize ATP although its ATP hydrolase activity can be activated artificially in vitro. Part of the complex F(0) domain. This is ATP synthase F(0) complex subunit 8 from Coturnix japonica (Japanese quail).